We begin with the raw amino-acid sequence, 209 residues long: Orotate phosphoribosyltransferase (209 aa).

Residues Arg-96, Lys-100, His-102, and 122 to 130 (EDLISTGGS) contribute to the 5-phospho-alpha-D-ribose 1-diphosphate site. An orotate-binding site is contributed by Ser-126.

Belongs to the purine/pyrimidine phosphoribosyltransferase family. PyrE subfamily. As to quaternary structure, homodimer. Mg(2+) serves as cofactor.

It carries out the reaction orotidine 5'-phosphate + diphosphate = orotate + 5-phospho-alpha-D-ribose 1-diphosphate. Its pathway is pyrimidine metabolism; UMP biosynthesis via de novo pathway; UMP from orotate: step 1/2. Catalyzes the transfer of a ribosyl phosphate group from 5-phosphoribose 1-diphosphate to orotate, leading to the formation of orotidine monophosphate (OMP). This Streptococcus thermophilus (strain CNRZ 1066) protein is Orotate phosphoribosyltransferase.